We begin with the raw amino-acid sequence, 353 residues long: Holliday junction branch migration complex subunit RuvB (353 aa).

A large ATPase domain (RuvB-L) region spans residues 4–185; sequence ADRLITAVGG…FGIVQRLEFY (182 aa). ATP-binding positions include isoleucine 24, arginine 25, glycine 66, lysine 69, threonine 70, threonine 71, 132–134, arginine 175, tyrosine 185, and arginine 222; that span reads EDF. Threonine 70 is a binding site for Mg(2+). Positions 186-256 are small ATPAse domain (RuvB-S); it reads NIADLSTIVA…TADKALNLLD (71 aa). Residues 259–353 are head domain (RuvB-H); it reads EHGFDHQDRR…GEFVDDAADL (95 aa). Residues arginine 295, arginine 314, and arginine 319 each contribute to the DNA site.

The protein belongs to the RuvB family. In terms of assembly, homohexamer. Forms an RuvA(8)-RuvB(12)-Holliday junction (HJ) complex. HJ DNA is sandwiched between 2 RuvA tetramers; dsDNA enters through RuvA and exits via RuvB. An RuvB hexamer assembles on each DNA strand where it exits the tetramer. Each RuvB hexamer is contacted by two RuvA subunits (via domain III) on 2 adjacent RuvB subunits; this complex drives branch migration. In the full resolvosome a probable DNA-RuvA(4)-RuvB(12)-RuvC(2) complex forms which resolves the HJ.

The protein localises to the cytoplasm. The enzyme catalyses ATP + H2O = ADP + phosphate + H(+). The RuvA-RuvB-RuvC complex processes Holliday junction (HJ) DNA during genetic recombination and DNA repair, while the RuvA-RuvB complex plays an important role in the rescue of blocked DNA replication forks via replication fork reversal (RFR). RuvA specifically binds to HJ cruciform DNA, conferring on it an open structure. The RuvB hexamer acts as an ATP-dependent pump, pulling dsDNA into and through the RuvAB complex. RuvB forms 2 homohexamers on either side of HJ DNA bound by 1 or 2 RuvA tetramers; 4 subunits per hexamer contact DNA at a time. Coordinated motions by a converter formed by DNA-disengaged RuvB subunits stimulates ATP hydrolysis and nucleotide exchange. Immobilization of the converter enables RuvB to convert the ATP-contained energy into a lever motion, pulling 2 nucleotides of DNA out of the RuvA tetramer per ATP hydrolyzed, thus driving DNA branch migration. The RuvB motors rotate together with the DNA substrate, which together with the progressing nucleotide cycle form the mechanistic basis for DNA recombination by continuous HJ branch migration. Branch migration allows RuvC to scan DNA until it finds its consensus sequence, where it cleaves and resolves cruciform DNA. This is Holliday junction branch migration complex subunit RuvB from Pseudomonas syringae pv. tomato (strain ATCC BAA-871 / DC3000).